A 284-amino-acid chain; its full sequence is MRYIGAHVSIAGGIENAPLRAQEIGATAFALFTKNQRQWKAPALTAKTIEAFRENCERCGYRPEHILPHDSYLINLGSPDAQKLDRSRNAFIDEMQRTEALGLVRLNLHPGSHLRESSEEACLETIAESVNLAHEATNTAVAVLENTAGQGSNLGHTFEQLAFIIQRVHDKSRVGVCLDTCHLFAAGYDLRTEEAVNGMFELFDASIGLHYLKGMHLNDAKPELDSRRDRHESIGKGKIGLDGFAAIIRHPASAEIPLILETPQPEIWSEEITLLRSFEEAQNC.

The Zn(2+) site is built by histidine 69, histidine 109, glutamate 145, aspartate 179, histidine 182, histidine 216, aspartate 229, histidine 231, and glutamate 261.

Belongs to the AP endonuclease 2 family. It depends on Zn(2+) as a cofactor.

It catalyses the reaction Endonucleolytic cleavage to 5'-phosphooligonucleotide end-products.. Its function is as follows. Endonuclease IV plays a role in DNA repair. It cleaves phosphodiester bonds at apurinic or apyrimidinic (AP) sites, generating a 3'-hydroxyl group and a 5'-terminal sugar phosphate. The sequence is that of Probable endonuclease 4 from Chlorobium phaeobacteroides (strain BS1).